Here is a 255-residue protein sequence, read N- to C-terminus: MVAPTEIKFEVEWSNIQQGFTKLIRMIEGESEPAFNQEIMMMMHTATYRICAYKNPQQLYDKYRELIENYAIQTVLPSLREKHDECMLRELAKRWNAHKLLVRLFSRRLVYLDDSFLSKKGLPSLREVGLNCFRDQVYREMQSMAAEAILALIHKEREGEQIDRELVRNVIDVFVENGMGTLKKYEEDFERLMLQDTASYYSSKASRWIQEESCLDYTLKPQQCLQRERERVTHYLHPTTEPKLFEVRYGIIIWN.

Belongs to the cullin family.

The polypeptide is Cullin-like protein 3 (Arabidopsis thaliana (Mouse-ear cress)).